We begin with the raw amino-acid sequence, 151 residues long: HTH-type transcriptional regulator FL11 (151 aa).

The HTH asnC-type domain maps to 5–66 (LDEIDRRIIK…IVNPEALGYS (62 aa)). Positions 24–43 (LREISKITGLAESTIHERIK) form a DNA-binding region, H-T-H motif. 98-104 (ETTGDYD) contacts L-arginine. Residues N118, D122, and 133–135 (THT) each bind L-lysine. Residues D122 and 133–135 (THT) each bind L-arginine.

Homodimer. Binds DNA as a dimer and an octamer.

In the famine mode, FL11 forms dimers and acts as a repressor, leading to growth arrest. In the feast mode, in the presence of high concentrations of lysine or arginine, four dimers assemble into an octamer and cover the fl11 and lysine biosynthesis promoters. This leads to the inhibition of fl11 expression and lysine biosynthesis, decrease of the FL11 concentration in the cell, derepression of the target genes and activation of the metabolism. Functionally, DNA-binding protein involved in the repression of transcription of a large number of genes, thereby arresting growth, in response to environmental changes. This Pyrococcus abyssi (strain GE5 / Orsay) protein is HTH-type transcriptional regulator FL11.